A 374-amino-acid polypeptide reads, in one-letter code: DNA integrity scanning protein DisA (374 aa).

The 139-residue stretch at 20-158 (EALMRASLSA…DGERRVLEES (139 aa)) folds into the DAC domain. Residues G87, L105, and 118-122 (TRHRT) contribute to the ATP site.

This sequence belongs to the DisA family. Homooctamer. Mg(2+) serves as cofactor.

The catalysed reaction is 2 ATP = 3',3'-c-di-AMP + 2 diphosphate. Functionally, participates in a DNA-damage check-point that is active prior to asymmetric division when DNA is damaged. DisA forms globular foci that rapidly scan along the chromosomes during sporulation, searching for lesions. When a lesion is present, DisA pauses at the lesion site. This triggers a cellular response that culminates in a temporary block in sporulation initiation. In terms of biological role, also has diadenylate cyclase activity, catalyzing the condensation of 2 ATP molecules into cyclic di-AMP (c-di-AMP). c-di-AMP acts as a signaling molecule that couples DNA integrity with progression of sporulation. The rise in c-di-AMP level generated by DisA while scanning the chromosome, operates as a positive signal that advances sporulation; upon encountering a lesion, the DisA focus arrests at the damaged site and halts c-di-AMP synthesis. In Streptomyces griseus subsp. griseus (strain JCM 4626 / CBS 651.72 / NBRC 13350 / KCC S-0626 / ISP 5235), this protein is DNA integrity scanning protein DisA.